The following is a 1066-amino-acid chain: Cytoplasmic dynein 2 intermediate chain 1 (1066 aa).

2 disordered regions span residues 22-366 (LWAI…ENAR) and 381-408 (YEDD…LEEL). Ser30 carries the post-translational modification Phosphoserine. Composition is skewed to basic and acidic residues over residues 30-135 (SKEE…EELR), 147-171 (ETRD…RSEE), 180-256 (DEDR…EERH), 264-308 (GFHF…KRDG), and 316-336 (NLVR…HEEG). Ser247 bears the Phosphoserine mark. Composition is skewed to acidic residues over residues 351-362 (ETVEIEKEETDL) and 381-397 (YEDD…ESSN). Basic and acidic residues predominate over residues 399–408 (PESREKLEEL). The binding to the DYNLT2B-DYNLT1/DYNLT3 dimer stretch occupies residues 473-552 (ASHRQKSRTQ…DIQTEEIETR (80 aa)). 4 WD repeats span residues 694-734 (ICES…RLHY), 775-821 (VHKK…KADI), 907-947 (IRPV…PLLQ), and 952-992 (TDSH…LGPV).

It belongs to the dynein light intermediate chain family. Intermediate chain of the cytoplasmic dynein complex 2, a multisubunit complex, composed at least of eleven different proteins. The cytoplasmic dynein 2 complex consists of two catalytic heavy chains (HCs) and a number of non-catalytic subunits presented by intermediate chains (ICs), light intermediate chains (LICs) and light chains (LCs). Among them, a heavy chain (DYNC2H1), two intermediate chains (DYNC2I2 and DYNC2I1), a light intermediate chain (DYNC2LI1), and a light chain (DYNLT2B) are unique to the cytoplasmic dynein complex 2, but a subset of the light chains are also shared by dynein-1 and dynein-2 complexes. Interacts with DYNC2I2; their C-terminal domains each bind a copy of the heavy chain, and their extended N-terminal regions are held together by an array of light chain dimers. Interacts with DYNLT2B. Interacts (via the N-terminal half) with DYNLT2B-DYNLT1 dimer or with DYNLT2B-DYNLT3 dimer; this interaction is crucial for retrograde trafficking of ciliary proteins. Expressed in chondrocytes (at protein level).

Its subcellular location is the cell projection. The protein resides in the cilium. It is found in the cytoplasm. The protein localises to the cytoskeleton. It localises to the microtubule organizing center. Its subcellular location is the centrosome. Acts as one of several non-catalytic accessory components of the cytoplasmic dynein 2 complex (dynein-2 complex), a motor protein complex that drives the movement of cargos along microtubules within cilia and flagella in concert with the intraflagellar transport (IFT) system. DYNC2I1 plays a major role in retrograde ciliary protein trafficking in cilia and flagella. Also requires to maintain a functional transition zone. This Homo sapiens (Human) protein is Cytoplasmic dynein 2 intermediate chain 1.